Consider the following 214-residue polypeptide: Thymidylate kinase (214 aa).

10–17 (GIDGCGKT) contributes to the ATP binding site.

It belongs to the thymidylate kinase family.

The catalysed reaction is dTMP + ATP = dTDP + ADP. In terms of biological role, phosphorylation of dTMP to form dTDP in both de novo and salvage pathways of dTTP synthesis. In Prochlorococcus marinus subsp. pastoris (strain CCMP1986 / NIES-2087 / MED4), this protein is Thymidylate kinase.